The chain runs to 365 residues: Zinc finger MYND domain-containing protein 12 (365 aa).

The Zn(2+) site is built by Cys17, Cys20, Cys28, Cys31, Cys37, His41, His50, and Cys54. Residues 17–54 form an MYND-type; atypical zinc finger; it reads CEVCEAPAERVCAACTVTYYCGVVHQKADWDSIHEKIC. TPR repeat units follow at residues 172 to 205 and 214 to 247; these read SLLH…ASCA and SGGY…WHAY.

In terms of tissue distribution, expressed predominantly in the testis.

The protein localises to the cell projection. It localises to the cilium. Its subcellular location is the flagellum. Required for sperm flagellum function and male fertility. In Homo sapiens (Human), this protein is Zinc finger MYND domain-containing protein 12 (ZMYND12).